Consider the following 186-residue polypeptide: UPF0301 protein Sfri_2850 (186 aa).

It belongs to the UPF0301 (AlgH) family.

In Shewanella frigidimarina (strain NCIMB 400), this protein is UPF0301 protein Sfri_2850.